A 167-amino-acid polypeptide reads, in one-letter code: Phosphopantetheine adenylyltransferase (167 aa).

Thr-13 serves as a coordination point for substrate. Residues 13–14 (TF) and His-21 each bind ATP. Positions 45, 78, and 92 each coordinate substrate. ATP-binding positions include 93-95 (GLR), Glu-103, and 128-134 (TQFISSS).

It belongs to the bacterial CoaD family. Homohexamer. The cofactor is Mg(2+).

Its subcellular location is the cytoplasm. It carries out the reaction (R)-4'-phosphopantetheine + ATP + H(+) = 3'-dephospho-CoA + diphosphate. Its pathway is cofactor biosynthesis; coenzyme A biosynthesis; CoA from (R)-pantothenate: step 4/5. Its function is as follows. Reversibly transfers an adenylyl group from ATP to 4'-phosphopantetheine, yielding dephospho-CoA (dPCoA) and pyrophosphate. The polypeptide is Phosphopantetheine adenylyltransferase (Wolbachia sp. subsp. Brugia malayi (strain TRS)).